Consider the following 384-residue polypeptide: MPFDSTNADLSVIPVKTPAELKRFIALPARLNAKDPNWITPLFMERTDALTPKTNPFFDHAEVQLFLATRGGRDVGRISAQIDQLTPQPTEGRLDGHFGMIAAEDDPAVFNVLFRAAEDWLRARGRTHAVGPFNLSINEEVGLLVWGFDTPPMVLMGHDPVYAGPRVEEQGYAKAQDLFAYKADETGDIPEIAQRRVKRGLPSGVVLRQLDMSRYDQEVQTLTEILNDAWSDNWGFTPTTEAETRQLAKSLKQVIDQRLVWFSEIDGEAAGVVVFLPNVNEAIADLKGKLLPFGWAKLLWRLKVKGVKSARIPLMGVKKKFQTSQRGRMLPFWMMKASRDMAMSLGYNRYEISWVLEANKAMTHIAENVGGTHYKTYRVYEKAL.

The protein resides in the cytoplasm. The enzyme catalyses 3-oxosphinganine + a fatty acyl-CoA = N-acyl-3-oxosphinganine + CoA + H(+). It catalyses the reaction 3-oxosphinganine + tetradecanoyl-CoA = N-tetradecanoyl-3-oxosphinganine + CoA + H(+). It carries out the reaction 3-oxosphinganine + hexadecanoyl-CoA = N-hexadecanoyl-3-oxosphinganine + CoA + H(+). The catalysed reaction is 3-oxosphinganine + (9Z)-hexadecenoyl-CoA = N-(9Z-hexadecenoyl)-3-oxosphinganine + CoA + H(+). The enzyme catalyses 3-oxosphinganine + octanoyl-CoA = N-octanoyl-3-oxosphinganine + CoA + H(+). It catalyses the reaction 3-oxosphinganine + decanoyl-CoA = N-decanoyl-3-oxosphinganine + CoA + H(+). It carries out the reaction 3-oxosphinganine + dodecanoyl-CoA = N-dodecanoyl-3-oxosphinganine + CoA + H(+). The catalysed reaction is 3-oxosphinganine + octadecanoyl-CoA = N-octadecanoyl-3-oxosphinganine + CoA + H(+). The enzyme catalyses 3-oxosphinganine + eicosanoyl-CoA = N-eicosanoyl-3-oxosphinganine + CoA + H(+). It catalyses the reaction 3-oxosphinganine + docosanoyl-CoA = N-docosanoyl-3-ketodihydrosphingosine + CoA + H(+). It carries out the reaction 3-oxosphinganine + tetracosanoyl-CoA = N-tetracosanoyl-3-oxosphinganine + CoA + H(+). It participates in lipid metabolism; sphingolipid metabolism. Functionally, involved in de novo bacterial ceramide synthesis. Catalyzes the condensation of 3-oxosphinganine with an acyl-CoA to generate oxidized ceramides. Can use acyl-CoA substrates ranging from C8 to C24, with highest in vitro activity with C14 and very little activity with acyl-CoA thioesters of 18 carbons or longer. May have a preference for monounsaturated acyl-CoA substrates, as it has a threefold greater preference for C16:1-CoA over C16:0-CoA as a substrate in vitro. This chain is Bacterial ceramide synthase, found in Caulobacter vibrioides (strain NA1000 / CB15N) (Caulobacter crescentus).